Here is a 615-residue protein sequence, read N- to C-terminus: Protein PSK SIMULATOR 2 (615 aa).

Gly2 carries N-myristoyl glycine lipidation. Over residues 16–27 (KKLRSNDDDKSR) the composition is skewed to basic and acidic residues. 2 disordered regions span residues 16-59 (KKLR…KSSK) and 506-529 (AHGV…SNTQ). Low complexity predominate over residues 42–52 (SDSYYSDNYGG). A compositionally biased stretch (polar residues) spans 512-529 (QETNHVSPPNNRTISNTQ).

The protein localises to the nucleus. In terms of biological role, promotes seedling growth probably via the regulation of phytosulfokine (PSK) signaling; PSK are peptide phytohormones acting as growth factors. Involved in PSK-induced root growth. Together with PSI1 and PSI3, required during vegetative growth and reproduction. The protein is Protein PSK SIMULATOR 2 of Arabidopsis thaliana (Mouse-ear cress).